The chain runs to 304 residues: MLTDKTIIVSLTSRLFADEITKLQKKIGSILPLQDPHKLQSLDTLGLNAVCSRDVFPDYVHMFSYLSKCTLAILEEVNPDNLILTRLDPSETYQIKNVYEPMFQWDGFSNLTVIPPVFGRQQATVTLESNGFDLVFPSVVPSDLAQAIIGKLLLYNLYSRLVESDPEINIEEVNMYTTNVTHMGRHYVLDINHNNPNEALKSLDDLAVYTCILSALIPRACLRVLTILMRHDQHELLDVFRGIVPREVYEIDANALSIGDDITRMTTFITYLQSLSSIFNLGAKLHLSSYASETQTATCWISYC.

This sequence belongs to the herpesviridae TRX2 protein family. Interacts with TRX1 and major capisd protein/MCP.

It localises to the virion. The protein resides in the host nucleus. In terms of biological role, structural component of the T=16 icosahedral capsid. The capsid is composed of pentamers and hexamers of major capsid protein/MCP, which are linked together by heterotrimers called triplexes. These triplexes are formed by a single molecule of triplex protein 1/TRX1 and two copies of triplex protein 2/TRX2. Additionally, TRX1 is required for efficient transport of TRX2 to the nucleus, which is the site of capsid assembly. The chain is Triplex capsid protein 2 from Saimiri sciureus (Common squirrel monkey).